A 5911-amino-acid chain; its full sequence is Nonribosomal peptide synthetase 30 (5911 aa).

The interval 1–22 is disordered; it reads MVPEKPTAQSKSGIGEPFRAGD. The interval 352-754 is adenylation 1; the sequence is ALIQPSSTAV…GRKDAQVKIR (403 aa). Residues 891-968 form the Carrier 1 domain; sequence PRPFSVEYSL…EAAAIVARGT (78 aa). The residue at position 928 (serine 928) is an O-(pantetheine 4'-phosphoryl)serine. The condensation 1 stretch occupies residues 1007–1422; that stretch reads EDAFPCTPLQ…ERLIFVIDQL (416 aa). The tract at residues 1467 to 1865 is adenylation 2; the sequence is ERALSQPDRP…SLMFVGRKAD (399 aa). Positions 2001–2077 constitute a Carrier 2 domain; that stretch reads QPTSELEAEM…NICSHSYYCS (77 aa). Residue serine 2038 is modified to O-(pantetheine 4'-phosphoryl)serine. The condensation 2 stretch occupies residues 2121–2538; the sequence is QDAYPCTPLQ…GPDINMSDIG (418 aa). Residues 2568–2977 form an adenylation 3 region; the sequence is EEQARLRPEA…GRKDSQVKIR (410 aa). Positions 3110–3186 constitute a Carrier 3 domain; that stretch reads QPSTNAQREL…LIADNSKSIK (77 aa). An O-(pantetheine 4'-phosphoryl)serine modification is found at serine 3147. The condensation 3 stretch occupies residues 3227–3652; that stretch reads VQDAYPCTPL…LELVIQAFMA (426 aa). The interval 3701 to 4108 is adenylation 4; it reads EERVREQPNA…GRKDSQVKIR (408 aa). The region spanning 4248 to 4325 is the Carrier 4 domain; the sequence is PPTTPLECQM…DIIATMTKNK (78 aa). O-(pantetheine 4'-phosphoryl)serine is present on serine 4285. A disordered region spans residues 4326-4347; sequence ATGASRRLPRDDDEPIPHTKYA. Residues 4353–4793 form a condensation 4 region; it reads SYAQGRLWFL…SLPLLTEDGR (441 aa). The adenylation 5 stretch occupies residues 4819-5231; sequence FKEQVSRHPN…GRMDVQVKIR (413 aa). Positions 5360-5436 constitute a Carrier 5 domain; it reads KPTTDMEVAL…ALARRQEEIV (77 aa). Serine 5397 is modified (O-(pantetheine 4'-phosphoryl)serine). Positions 5474-5828 are condensation 5; it reads VEDMLPLTSM…GIKMKLHFFT (355 aa).

The protein belongs to the NRP synthetase family.

It functions in the pathway secondary metabolite biosynthesis. Functionally, nonribosomal peptide synthetase; part of the gene cluster that mediates the biosynthesis of sansalvamide, a cyclic pentadepsipeptide that shows promising results as potential anti-cancer drug. The nonribosmal peptide synthetase NRPS30 produces sansalvamide by incorporating successively one phenylalanine, one leucine, one alpha-hydroxyisocaproic acid (HICA), one valine and one leucine before sansalvamide is released from by cyclization by the terminal C domain of NRPS30. The HICA residue is probably provided by reduction of alpha-ketoisocaproate by the cluster-specific aldo-keto reductase (NECHADRAFT_45914). The polypeptide is Nonribosomal peptide synthetase 30 (Fusarium vanettenii (strain ATCC MYA-4622 / CBS 123669 / FGSC 9596 / NRRL 45880 / 77-13-4) (Fusarium solani subsp. pisi)).